A 295-amino-acid polypeptide reads, in one-letter code: Elongation factor Ts (295 aa).

The interval 79–82 (TDFV) is involved in Mg(2+) ion dislocation from EF-Tu.

The protein belongs to the EF-Ts family.

The protein localises to the cytoplasm. Functionally, associates with the EF-Tu.GDP complex and induces the exchange of GDP to GTP. It remains bound to the aminoacyl-tRNA.EF-Tu.GTP complex up to the GTP hydrolysis stage on the ribosome. In Bacillus mycoides (strain KBAB4) (Bacillus weihenstephanensis), this protein is Elongation factor Ts.